The following is a 139-amino-acid chain: uncharacterized protein (139 aa).

Over residues 1–11 (MALSMSLSSDI) the composition is skewed to polar residues. Disordered stretches follow at residues 1–80 (MALS…AAAA) and 100–139 (ASSP…LARS). Low complexity predominate over residues 63–80 (GAGSASAGGSRLAAAAAA).

This is an uncharacterized protein from Homo sapiens (Human).